The sequence spans 398 residues: Probable elongation factor 1-gamma (398 aa).

Residues 66–199 (GTSANAETVQ…SVAQFNQAKF (134 aa)) enclose the GST C-terminal domain. Residues 210-248 (APKAEKPKKEAKPAAAAAQPEDDEPKEEKSKDPFQDMPK) form a disordered region. Residues 211-221 (PKAEKPKKEAK) are compositionally biased toward basic and acidic residues. An EF-1-gamma C-terminal domain is found at 239-398 (SKDPFQDMPK…KKFNQGKIFK (160 aa)).

EF-1 is composed of four subunits: alpha, beta, delta, and gamma. AMPylated by fic-1.

Functionally, probably plays a role in anchoring the complex to other cellular components. This chain is Probable elongation factor 1-gamma, found in Caenorhabditis elegans.